Reading from the N-terminus, the 570-residue chain is DNA polymerase/3'-5' exonuclease PolX (570 aa).

The interval 1 to 315 (MHKKDIIRLL…PLIPPEIRES (315 aa)) is DNA polymerase type-X. Residues D193, D195, and D240 each contribute to the a divalent metal cation site. The 3'-5' exonuclease stretch occupies residues 333-570 (QIKGDLHMHS…DVEAFLKRND (238 aa)). Residues H339, H341, H371, E410, H437, H465, D526, and H528 each contribute to the Mn(2+) site.

It in the N-terminal section; belongs to the DNA polymerase type-X family. This sequence in the C-terminal section; belongs to the PHP family. As to quaternary structure, monomer. It depends on Mn(2+) as a cofactor. Mg(2+) serves as cofactor.

The catalysed reaction is DNA(n) + a 2'-deoxyribonucleoside 5'-triphosphate = DNA(n+1) + diphosphate. It catalyses the reaction Exonucleolytic cleavage in the 3'- to 5'-direction to yield nucleoside 5'-phosphates.. The polymerization activity is inhibited in the presence of 2'-3'-dideoxynucleoside 5'-triphosphate (ddNTP). In terms of biological role, strictly DNA-template-directed DNA polymerase, preferentially acting on DNA structures containing gaps from one to a few nucleotides and bearing a phosphate group at the 5' end of the downstream DNA. The fact that PolX is able to conduct filling of a single-nucleotide gap, allowing further sealing of the resulting nick by a DNA ligase, points to a putative role in base excision repair (BER) during the B.subtilis life cycle. Moreover, also possesses a 3'-5' exonuclease activity able to edit unpaired 3'-termini in a gapped DNA substrate and likely involved in resecting unannealed 3'-termini during DNA repair. The same PolX molecule could perform the subsequent gap-filling step. Does not display 5'-deoxyribose 5'-phosphate (dRP) lyase activity, as predicted by the lack of the lysine and tyrosine residues responsible for the dRP lyase activity in some other PolX members. This Bacillus subtilis (strain 168) protein is DNA polymerase/3'-5' exonuclease PolX (polX).